Reading from the N-terminus, the 489-residue chain is UDP-N-acetylmuramoylalanine--D-glutamate ligase (489 aa).

126–132 (GTNGKTT) serves as a coordination point for ATP.

This sequence belongs to the MurCDEF family.

Its subcellular location is the cytoplasm. The enzyme catalyses UDP-N-acetyl-alpha-D-muramoyl-L-alanine + D-glutamate + ATP = UDP-N-acetyl-alpha-D-muramoyl-L-alanyl-D-glutamate + ADP + phosphate + H(+). Its pathway is cell wall biogenesis; peptidoglycan biosynthesis. In terms of biological role, cell wall formation. Catalyzes the addition of glutamate to the nucleotide precursor UDP-N-acetylmuramoyl-L-alanine (UMA). In Mycolicibacterium paratuberculosis (strain ATCC BAA-968 / K-10) (Mycobacterium paratuberculosis), this protein is UDP-N-acetylmuramoylalanine--D-glutamate ligase.